Reading from the N-terminus, the 1011-residue chain is Poly [ADP-ribose] polymerase 1 (1011 aa).

2 PARP-type zinc fingers span residues 9–91 (YRAE…ETGA) and 113–203 (FAAE…PATK). Zn(2+)-binding residues include C21, C24, H53, C56, C125, C128, H159, and C162. Residues 198–235 (QLPATKTEGKRKGEEVDGNVVAKKKSRKEKEKESKQEK) form a disordered region. 2 consecutive short sequence motifs (nuclear localization signal) follow at residues 207–209 (KRK) and 220–225 (KKKSRK). The PADR1 zinc-binding domain occupies 224-358 (RKEKEKESKQ…CKKQDRIFPP (135 aa)). Basic and acidic residues predominate over residues 225 to 235 (KEKEKESKQEK). Residues 289–331 (GALLPCEECKGQFVFKSDAYYCSGDITAWTKCVAKTQTPNRKD) form a zinc ribbon region. 4 residues coordinate Zn(2+): C294, C297, C310, and C320. Residues 359–378 (EAATVNSAPPPPASAPLTET) form a disordered region. Residues 371 to 522 (ASAPLTETVT…PSKSEKKMKL (152 aa)) are automodification domain. A BRCT domain is found at 382–473 (PQDKPLTNMK…KGFQELLSLH (92 aa)). PolyADP-ribosyl glutamic acid is present on residues E403, E404, E410, E411, E432, E434, E441, E442, E453, E454, E468, E481, E485, E488, E509, E510, and E517. Residues 496 to 519 (SKPANMKSAGKVKEEQGPSKSEKK) are disordered. A compositionally biased stretch (basic and acidic residues) spans 506 to 519 (KVKEEQGPSKSEKK). The 97-residue stretch at 539 to 635 (SAHVFEKGGK…KNFTKYPKKF (97 aa)) folds into the WGR domain. The PARP alpha-helical domain maps to 659–776 (KSKLAKPIQD…DIEVAYSLLR (118 aa)). One can recognise a PARP catalytic domain in the interval 785–1011 (DPIDINYEKL…LKFNYKTSLW (227 aa)). NAD(+) contacts are provided by residues 859 to 861 (HGS), G868, R875, and S901. Residue E985 is the For poly [ADP-ribose] polymerase activity of the active site.

It belongs to the ARTD/PARP family. As to quaternary structure, homodimer; PARP-type zinc-fingers from separate parp1 molecules form a dimer module that specifically recognizes DNA strand breaks. In terms of processing, poly-ADP-ribosylated on serine, glutamate and aspartate residues by autocatalysis. Auto-ADP-ribosylation on serine takes place following interaction with HPF1. Auto poly-ADP-ribosylation on serine residues promotes its dissociation from chromatin.

It is found in the chromosome. The protein localises to the nucleus. It localises to the nucleolus. The protein resides in the cytoplasm. Its subcellular location is the cytosol. The catalysed reaction is NAD(+) + (ADP-D-ribosyl)n-acceptor = nicotinamide + (ADP-D-ribosyl)n+1-acceptor + H(+).. It carries out the reaction L-seryl-[protein] + NAD(+) = O-(ADP-D-ribosyl)-L-seryl-[protein] + nicotinamide + H(+). The enzyme catalyses L-aspartyl-[protein] + NAD(+) = 4-O-(ADP-D-ribosyl)-L-aspartyl-[protein] + nicotinamide. It catalyses the reaction L-glutamyl-[protein] + NAD(+) = 5-O-(ADP-D-ribosyl)-L-glutamyl-[protein] + nicotinamide. The catalysed reaction is L-tyrosyl-[protein] + NAD(+) = O-(ADP-D-ribosyl)-L-tyrosyl-[protein] + nicotinamide + H(+). It carries out the reaction L-histidyl-[protein] + NAD(+) = N(tele)-(ADP-D-ribosyl)-L-histidyl-[protein] + nicotinamide + H(+). With respect to regulation, ADP-ribosyltransferase activity is regulated via an allosteric activation mechanism. In absence of activation signal, parp1 is autoinhibited by the PARP alpha-helical domain (also named HD region), which prevents effective NAD(+)-binding. Activity is highly stimulated by signals, such as DNA strand breaks. Binding to damaged DNA unfolds the PARP alpha-helical domain, relieving autoinhibition. Poly-ADP-ribosyltransferase activity is tightly regulated and parp1 is removed from damaged chromatin following initial poly-ADP-ribosylation of chromatin to avoid prolonged residence (trapping) that has cytotoxic consequences. A number of factors or post-translational modifications (auto-poly-ADP-ribosylation) promote parp1 removal from chromatin. Its function is as follows. Poly-ADP-ribosyltransferase that mediates poly-ADP-ribosylation of proteins and plays a key role in DNA repair. Mediates glutamate, aspartate, serine, histidine or tyrosine ADP-ribosylation of proteins: the ADP-D-ribosyl group of NAD(+) is transferred to the acceptor carboxyl group of target residues and further ADP-ribosyl groups are transferred to the 2'-position of the terminal adenosine moiety, building up a polymer with an average chain length of 20-30 units. Serine ADP-ribosylation of proteins constitutes the primary form of ADP-ribosylation of proteins in response to DNA damage. Specificity for the different amino acids is conferred by interacting factors, such as hpf1 and nmnat1. Following interaction with hpf1, catalyzes serine ADP-ribosylation of target proteins; hpf1 confers serine specificity by completing the parp1 active site. Also catalyzes tyrosine ADP-ribosylation of target proteins following interaction with hpf1. Following interaction with nmnat1, catalyzes glutamate and aspartate ADP-ribosylation of target proteins; nmnat1 confers glutamate and aspartate specificity. Parp1 initiates the repair of DNA breaks: recognizes and binds DNA breaks within chromatin and recruits hpf1, licensing serine ADP-ribosylation of target proteins, such as histones (H2BS6ADPr and H3S10ADPr), thereby promoting decompaction of chromatin and the recruitment of repair factors leading to the reparation of DNA strand breaks. In addition to base excision repair (BER) pathway, also involved in double-strand breaks (DSBs) repair. Mediates the poly-ADP-ribosylation of a number of proteins. In addition to proteins, also able to ADP-ribosylate DNA: catalyzes ADP-ribosylation of DNA strand break termini containing terminal phosphates and a 2'-OH group in single- and double-stranded DNA, respectively. Parp1-mediated DNA repair in neurons plays a role in sleep: senses DNA damage in neurons and promotes sleep, facilitating efficient DNA repair. In addition to DNA repair, also involved in other processes, such as transcription regulation, programmed cell death, membrane repair, adipogenesis and innate immunity. Acts as a repressor of transcription: binds to nucleosomes and modulates chromatin structure in a manner similar to histone H1, thereby altering RNA polymerase II. Acts both as a positive and negative regulator of transcription elongation, depending on the context. Poly-ADP-ribose chains generated by parp1 also play a role in poly-ADP-ribose-dependent cell death, a process named parthanatos. Also acts as a negative regulator of the cGAS-STING pathway by mediating poly-ADP-ribosylation and inactivation of cgas. Acts as a negative regulator of adipogenesis by catalyzing poly ADP-ribosylation of histone H2B on 'Glu-35' (H2BE35ADPr). The protein is Poly [ADP-ribose] polymerase 1 (PARP1) of Gallus gallus (Chicken).